The following is an 807-amino-acid chain: Glycerol-3-phosphate acyltransferase (807 aa).

Residues 308 to 313 (CHRSHM) carry the HXXXXD motif motif.

The protein belongs to the GPAT/DAPAT family.

It localises to the cell inner membrane. It catalyses the reaction sn-glycerol 3-phosphate + an acyl-CoA = a 1-acyl-sn-glycero-3-phosphate + CoA. Its pathway is phospholipid metabolism; CDP-diacylglycerol biosynthesis; CDP-diacylglycerol from sn-glycerol 3-phosphate: step 1/3. This is Glycerol-3-phosphate acyltransferase from Shewanella denitrificans (strain OS217 / ATCC BAA-1090 / DSM 15013).